Reading from the N-terminus, the 440-residue chain is MGEKPTIAISHLGCEKNRIDTEHMLGLLVKAGYGVDTNEELADYVIVNTCSFIESAREESVRTLVELAEANKKIVITGCMAQHFQTQLLEELPEAVAVVGTGDYHKIVSVIERAEQGERVTLVSAEPTYIADETTPRYRTTTEGVAYLRVAEGCDYRCAFCIIPHLRGNQRSRTIESIVAEAEQLVAQGVQEIILISQITTNYGLDIYGKPKLAELLRALGKINVPWIRMHYAYPTGLTPDVIAAIQETPNVLPYLDLPLQHSHSEVLRSMNRPWQGRVNDEIIERLKIAIPGAVLRTTFIVGFPGETEAQFEHLLQFVQRHEFDHVGVFTFSAEEGTPAYKLPNQLPQEVMDERRDRLMALQQPISWRKNQQEVGKTVEVLIEQENPESGKLIGRSGRFSPEVDGQVYVDGEAKLGTIIPVKIHSADEYDLFGQVVSHN.

Positions 5–116 (PTIAISHLGC…IVSVIERAEQ (112 aa)) constitute an MTTase N-terminal domain. [4Fe-4S] cluster-binding residues include Cys14, Cys50, Cys79, Cys154, Cys158, and Cys161. The Radical SAM core domain occupies 140–370 (TTTEGVAYLR…ALQQPISWRK (231 aa)). The 67-residue stretch at 372 to 438 (QQEVGKTVEV…EYDLFGQVVS (67 aa)) folds into the TRAM domain.

The protein belongs to the methylthiotransferase family. RimO subfamily. The cofactor is [4Fe-4S] cluster.

The protein resides in the cytoplasm. The catalysed reaction is L-aspartate(89)-[ribosomal protein uS12]-hydrogen + (sulfur carrier)-SH + AH2 + 2 S-adenosyl-L-methionine = 3-methylsulfanyl-L-aspartate(89)-[ribosomal protein uS12]-hydrogen + (sulfur carrier)-H + 5'-deoxyadenosine + L-methionine + A + S-adenosyl-L-homocysteine + 2 H(+). In terms of biological role, catalyzes the methylthiolation of an aspartic acid residue of ribosomal protein uS12. The sequence is that of Ribosomal protein uS12 methylthiotransferase RimO from Nostoc sp. (strain PCC 7120 / SAG 25.82 / UTEX 2576).